The primary structure comprises 313 residues: MSWLSLTFRIGSDYVDLVGDRLLERGALSVDVHDAGEGTSQEQPLFGEPGAPLDQFWQQAEVTVLLEENANIDEIIQGVAEVIGLPALPEYQLAQVMEQDWVRLTQAQFEPIRISSRLWVVPSWHEPPDPAAISLRLDPGLAFGTGSHPTTRLCLTWLDQFLQPGDSVLDYGCGSGILAIAALKFGADRVTGMDIDPNAITASLDNARNNFCDPDRLLFTTVLPPLVEDDRASAEWAPVTIVVANILANPLIMLAPVLMKALQPGGRIVLSGILETQADEVLQVYSEWFDMHIAAKEQGWVLLAGQKSGGGFA.

S-adenosyl-L-methionine is bound by residues threonine 151, glycine 172, aspartate 194, and asparagine 245.

This sequence belongs to the methyltransferase superfamily. PrmA family.

Its subcellular location is the cytoplasm. It catalyses the reaction L-lysyl-[protein] + 3 S-adenosyl-L-methionine = N(6),N(6),N(6)-trimethyl-L-lysyl-[protein] + 3 S-adenosyl-L-homocysteine + 3 H(+). Functionally, methylates ribosomal protein L11. This Nitrosomonas europaea (strain ATCC 19718 / CIP 103999 / KCTC 2705 / NBRC 14298) protein is Ribosomal protein L11 methyltransferase.